The following is a 187-amino-acid chain: Peptidyl-tRNA hydrolase (187 aa).

TRNA is bound at residue Tyr-15. His-20 serves as the catalytic Proton acceptor. Residues Phe-65, Asn-67, and Asn-113 each coordinate tRNA.

It belongs to the PTH family. As to quaternary structure, monomer.

Its subcellular location is the cytoplasm. The catalysed reaction is an N-acyl-L-alpha-aminoacyl-tRNA + H2O = an N-acyl-L-amino acid + a tRNA + H(+). Its function is as follows. Hydrolyzes ribosome-free peptidyl-tRNAs (with 1 or more amino acids incorporated), which drop off the ribosome during protein synthesis, or as a result of ribosome stalling. Catalyzes the release of premature peptidyl moieties from peptidyl-tRNA molecules trapped in stalled 50S ribosomal subunits, and thus maintains levels of free tRNAs and 50S ribosomes. The polypeptide is Peptidyl-tRNA hydrolase (Methylococcus capsulatus (strain ATCC 33009 / NCIMB 11132 / Bath)).